A 2115-amino-acid polypeptide reads, in one-letter code: Nuclear mitotic apparatus protein 1 (2115 aa).

Positions 1 to 212 (MTLHATRGAA…SPMGDILQTP (212 aa)) are head (Globular). At Ser162 the chain carries Phosphoserine. At Thr163 the chain carries Phosphothreonine. Residues Ser169 and Ser203 each carry the phosphoserine modification. Thr211 carries the post-translational modification Phosphothreonine. The stretch at 213–1699 (QFQMRRLKKQ…ADQQLRDLGK (1487 aa)) forms a coiled coil. Ser271 is subject to Phosphoserine. Lys379 is subject to N6-acetyllysine. Phosphoserine is present on residues Ser388 and Ser395. Residues 549 to 560 (LRHQVEQLSSSL) are compositionally biased toward low complexity. 2 disordered regions span residues 549–593 (LRHQ…EERE) and 746–766 (LVEQ…GRKG). Positions 561–581 (KQKEQQLKEVAEKQEATRQDH) are enriched in basic and acidic residues. The residue at position 820 (Ser820) is a Phosphoserine. Lys891 is subject to N6-acetyllysine. Basic and acidic residues-rich tracts occupy residues 926-950 (AGEQ…RQPE) and 996-1013 (QEER…TQER). Disordered regions lie at residues 926-958 (AGEQ…QQGR) and 988-1013 (LMES…TQER). Phosphothreonine; by PLK1 is present on Thr1047. A compositionally biased stretch (basic and acidic residues) spans 1090–1102 (LKEQLAKKEKEHA). Disordered regions lie at residues 1090-1225 (LKEQ…RKNS) and 1275-1296 (ETAS…EVQS). Low complexity-rich tracts occupy residues 1103 to 1112 (SGSGAQSEAA) and 1133 to 1142 (EQQCQKQQEQ). Over residues 1145 to 1163 (SLERSLEAERASRAERDSA) the composition is skewed to basic and acidic residues. A Phosphoserine modification is found at Ser1187. Residues 1198–1224 (KVQDHSKAEDEWKAQVARGRQEAERKN) show a composition bias toward basic and acidic residues. Phosphoserine is present on Ser1225. Residues 1283–1296 (AAERSSALREEVQS) are compositionally biased toward basic and acidic residues. Lys1511 bears the N6-acetyllysine mark. Ser1601 bears the Phosphoserine mark. Lys1699 is covalently cross-linked (Glycyl lysine isopeptide (Lys-Gly) (interchain with G-Cter in SUMO2)). A membrane-binding domain 1 region spans residues 1699-1876 (KFQVATDALK…NSALLSLPGY (178 aa)). Residues 1700–2115 (FQVATDALKS…TPRAKGKAKH (416 aa)) form a tail (Globular) region. A phosphoserine mark is found at Ser1721, Ser1724, and Ser1728. Positions 1734–1761 (PLSITSKLPRTQPDGTSVPGEPASPISQ) are disordered. Positions 1735 to 1748 (LSITSKLPRTQPDG) are enriched in polar residues. The short motif at 1742-1748 (PRTQPDG) is the Tankyrase-binding domain element. A phosphoserine mark is found at Ser1757 and Ser1760. Lys1766 is covalently cross-linked (Glycyl lysine isopeptide (Lys-Gly) (interchain with G-Cter in SUMO1); alternate). A Glycyl lysine isopeptide (Lys-Gly) (interchain with G-Cter in SUMO2); alternate cross-link involves residue Lys1766. 2 positions are modified to phosphoserine; by PLK1: Ser1769 and Ser1772. Tyr1774 bears the Phosphotyrosine mark. Position 1776 is a phosphothreonine (Thr1776). The residue at position 1788 (Ser1788) is a Phosphoserine. The segment at 1788–1810 (SSLDSLGDVFLDSGRKTRSARRR) is 4.1-binding domain. Ser1789 carries the post-translational modification Phosphoserine; by PLK1. Phosphoserine occurs at positions 1792 and 1800. Thr1804 carries the phosphothreonine modification. Lys1822 is covalently cross-linked (Glycyl lysine isopeptide (Lys-Gly) (interchain with G-Cter in SUMO2)). Disordered regions lie at residues 1826–1901 (EEPD…GRNS) and 1955–2115 (EMKT…KAKH). Phosphoserine is present on residues Ser1830 and Ser1833. The segment covering 1830–1857 (SANSSFYSTRSAPASQASLRATSSTQSL) has biased composition (polar residues). Ser1834 carries the post-translational modification Phosphoserine; by PLK1. At Tyr1836 the chain carries Phosphotyrosine. Position 1840 is a phosphoserine (Ser1840). Phosphoserine; alternate is present on Ser1844. Ser1844 carries an O-linked (GlcNAc) serine; alternate glycan. 2 positions are modified to phosphoserine: Ser1862 and Ser1887. The span at 1879 to 1891 (TTRSSARRSQAGV) shows a compositional bias: polar residues. The tract at residues 1882–1985 (SSARRSQAGV…AEGTGITTRQ (104 aa)) is tubulin-binding domain. Positions 1892–1926 (SSGAPPGRNSFYMGTCQDEPEQLDDWNRIAELQQR) are GPSM2-binding domain. The segment covering 1955–1966 (EMKTGDPQETLR) has biased composition (basic and acidic residues). Position 1969 is a phosphoserine (Ser1969). Residues 1981–2060 (ITTRQQRKRV…SILNTPKKLG (80 aa)) are membrane-binding domain 2. The short motif at 1984–1989 (RQQRKR) is the Nuclear localization signal element. Position 1991 is a phosphoserine (Ser1991). Thr2000 is modified (phosphothreonine). At Ser2003 the chain carries Phosphoserine. Thr2015 carries the phosphothreonine; by CDK1 modification. Over residues 2015-2032 (TPRDRHEGRKQSTTEAQK) the composition is skewed to basic and acidic residues. At Ser2047 the chain carries Phosphoserine. Thr2055 carries the phosphothreonine; by CDK1 modification. 2 positions are modified to phosphoserine: Ser2062 and Ser2077. Ser2087 carries the post-translational modification Phosphoserine; by CDK1. The segment covering 2089–2108 (RIATTTASAATAAAIGATPR) has biased composition (low complexity). Thr2106 carries the post-translational modification Phosphothreonine; by CDK1.

Homodimer. Also forms multiarm oligomers by association of C-terminal tail domains, oligomers may further assemble to form a hexagonal nuclear lattice-like network. Associates with the dynein-dynactin complex; this association promotes the transport and accumulation of NUMA1 at the mitotic spindle poles that is inhibited by the BRISC complex in a PLK1-dependent manner. Part of a spindle orientation complex at least composed of GNAI1, GPSM2 and NUMA1. Interacts (via C-terminus) with microtubules (MTs); this interaction is direct and promotes both MT bundle formation and stability in a dynein-dynactin complex- and CDK1-independent manner. Interacts with EPB41 and EPB41L2; these interactions are negatively regulated by CDK1 during metaphase and are important for anaphase-specific localization of NUMA1 in symmetrically dividing cells. Interacts (via C-terminus) with GPSM2 (via TPR repeats); this interaction is direct, prevented by competitive binding of INSC, is inhibited in a PLK1-dependent manner, blocks the association of NUMA1 with MTs and inhibits NUMA1-induced MT bundle formation, prevents the association of NUMA1 with SPAG5, induces mitotic spindle pole localization of GPSM2, both metaphase cell cortex localization of NUMA1 and mitotic spindle organization. Does not interact with GPSM2 during anaphase. Interacts (via C-terminus) with the nuclear importin alpha/importin beta receptor; this interaction is inhibited by RanGTP. Interacts (via C-terminus) with KPNB1; this interaction is inhibited by RanGTP and the BRISC complex. Interacts with ABRAXAS2 and the BRISC complex; these interactions regulate mitotic spindle assembly. Interacts (via N-terminal end of the coiled-coil domain) with RAE1; this interaction promotes mitotic spindle formation. Interacts (via C-terminus) with SPAG5 (via C-terminus); this interaction promotes the recruitment of SPAG5 to the MTs at spindle poles in a dynein-dynactin-dependent manner and regulates mitotic spindle organization and proper chromosome alignment during mitosis. Interacts with TNKS; this interaction occurs at the onset of mitosis. Interacts with TNKS2. Interacts with tubulin. Interacts with KHDC3L (via C-terminus). Phosphorylation and dephosphorylation on Thr-2055 regulates the extent of cortical NUMA1 and the dynein-dynactin complex localization during mitotic metaphase and anaphase. In metaphase, phosphorylation on Thr-2055 occurs in a kinase CDK1-dependent manner; this phosphorylation maintains low levels of cortical dynein-dynactin complex at metaphase, and hence proper spindle positioning. In anaphase, dephosphorylated on Thr-2055 by phosphatase PPP2CA; this dephosphorylation stimulates its membrane association and with the dynein-dynactin complex its enrichment at the cell cortex, and hence robust spindle elongation. Probably also phosphorylated on Thr-2015 and Ser-2087 by CDK1; these phosphorylations may regulate its cell cortex recruitment during metaphase and anaphase. Phosphorylated on Thr-1047, Ser-1769, Ser-1772, Ser-1789 and Ser-1834 by PLK1; these phosphorylations induce cortical dynein-dynactin complex dissociation from the NUMA1-GPSM2 complex and negatively regulates cortical dynein-dynactin complex localization. In terms of processing, ADP-ribosylated by TNKS at the onset of mitosis; ADP-ribosylation is not required for its localization to spindle poles. Post-translationally, O-glycosylated during cytokinesis at sites identical or close to phosphorylation sites, this interferes with the phosphorylation status. Ubiquitinated with 'Lys-63'-linked polyubiquitin chains. Deubiquitination by the BRISC complex is important for the incorporation of NUMA1 into mitotic spindle poles and normal spindle pole function, probably by modulating interactions between NUMA1, dynein-dynactin complex and importin-beta.

The protein resides in the nucleus. The protein localises to the nucleoplasm. It localises to the nucleus matrix. It is found in the chromosome. Its subcellular location is the cytoplasm. The protein resides in the cytoskeleton. The protein localises to the microtubule organizing center. It localises to the centrosome. It is found in the spindle pole. Its subcellular location is the cell cortex. The protein resides in the cell membrane. The protein localises to the lateral cell membrane. It localises to the cytosol. Its function is as follows. Microtubule (MT)-binding protein that plays a role in the formation and maintenance of the spindle poles and the alignement and the segregation of chromosomes during mitotic cell division. Functions to tether the minus ends of MTs at the spindle poles, which is critical for the establishment and maintenance of the spindle poles. Plays a role in the establishment of the mitotic spindle orientation during metaphase and elongation during anaphase in a dynein-dynactin-dependent manner. In metaphase, part of a ternary complex composed of GPSM2 and G(i) alpha proteins, that regulates the recruitment and anchorage of the dynein-dynactin complex in the mitotic cell cortex regions situated above the two spindle poles, and hence regulates the correct oritentation of the mitotic spindle. During anaphase, mediates the recruitment and accumulation of the dynein-dynactin complex at the cell membrane of the polar cortical region through direct association with phosphatidylinositol 4,5-bisphosphate (PI(4,5)P2), and hence participates in the regulation of the spindle elongation and chromosome segregation. Also binds to other polyanionic phosphoinositides, such as phosphatidylinositol 3-phosphate (PIP), lysophosphatidic acid (LPA) and phosphatidylinositol triphosphate (PIP3), in vitro. Also required for proper orientation of the mitotic spindle during asymmetric cell divisions. Plays a role in mitotic MT aster assembly. Involved in anastral spindle assembly. Positively regulates TNKS protein localization to spindle poles in mitosis. Highly abundant component of the nuclear matrix where it may serve a non-mitotic structural role, occupies the majority of the nuclear volume. Required for epidermal differentiation and hair follicle morphogenesis. This is Nuclear mitotic apparatus protein 1 from Homo sapiens (Human).